We begin with the raw amino-acid sequence, 418 residues long: Serine hydroxymethyltransferase (418 aa).

Residues leucine 120 and 124-126 (GHL) each bind (6S)-5,6,7,8-tetrahydrofolate. Lysine 229 bears the N6-(pyridoxal phosphate)lysine mark. 353-355 (SPF) provides a ligand contact to (6S)-5,6,7,8-tetrahydrofolate.

The protein belongs to the SHMT family. In terms of assembly, homodimer. Pyridoxal 5'-phosphate serves as cofactor.

It is found in the cytoplasm. The enzyme catalyses (6R)-5,10-methylene-5,6,7,8-tetrahydrofolate + glycine + H2O = (6S)-5,6,7,8-tetrahydrofolate + L-serine. It functions in the pathway one-carbon metabolism; tetrahydrofolate interconversion. It participates in amino-acid biosynthesis; glycine biosynthesis; glycine from L-serine: step 1/1. In terms of biological role, catalyzes the reversible interconversion of serine and glycine with tetrahydrofolate (THF) serving as the one-carbon carrier. This reaction serves as the major source of one-carbon groups required for the biosynthesis of purines, thymidylate, methionine, and other important biomolecules. Also exhibits THF-independent aldolase activity toward beta-hydroxyamino acids, producing glycine and aldehydes, via a retro-aldol mechanism. The protein is Serine hydroxymethyltransferase of Psychrobacter cryohalolentis (strain ATCC BAA-1226 / DSM 17306 / VKM B-2378 / K5).